A 628-amino-acid chain; its full sequence is 1-deoxy-D-xylulose-5-phosphate synthase (628 aa).

Thiamine diphosphate contacts are provided by residues His80 and 121-123 (GHS). Mg(2+) is bound at residue Asp152. Thiamine diphosphate is bound by residues 153 to 154 (GG), Asn181, Tyr289, and Glu370. Asn181 lines the Mg(2+) pocket.

This sequence belongs to the transketolase family. DXPS subfamily. In terms of assembly, homodimer. Requires Mg(2+) as cofactor. It depends on thiamine diphosphate as a cofactor.

The enzyme catalyses D-glyceraldehyde 3-phosphate + pyruvate + H(+) = 1-deoxy-D-xylulose 5-phosphate + CO2. It participates in metabolic intermediate biosynthesis; 1-deoxy-D-xylulose 5-phosphate biosynthesis; 1-deoxy-D-xylulose 5-phosphate from D-glyceraldehyde 3-phosphate and pyruvate: step 1/1. Catalyzes the acyloin condensation reaction between C atoms 2 and 3 of pyruvate and glyceraldehyde 3-phosphate to yield 1-deoxy-D-xylulose-5-phosphate (DXP). The chain is 1-deoxy-D-xylulose-5-phosphate synthase from Alkalilimnicola ehrlichii (strain ATCC BAA-1101 / DSM 17681 / MLHE-1).